Here is a 323-residue protein sequence, read N- to C-terminus: GTP 3',8-cyclase (323 aa).

The Radical SAM core domain occupies 4-228; it reads KYGRSIDYLR…VPVNIQNNGP (225 aa). Arginine 13 serves as a coordination point for GTP. Cysteine 20 and cysteine 24 together coordinate [4Fe-4S] cluster. Tyrosine 26 contributes to the S-adenosyl-L-methionine binding site. Residue cysteine 27 participates in [4Fe-4S] cluster binding. Arginine 63 is a GTP binding site. Glycine 67 contacts S-adenosyl-L-methionine. Threonine 94 contacts GTP. Serine 118 provides a ligand contact to S-adenosyl-L-methionine. Lysine 155 contributes to the GTP binding site. Methionine 189 contributes to the S-adenosyl-L-methionine binding site. [4Fe-4S] cluster contacts are provided by cysteine 252 and cysteine 255. 257–259 is a GTP binding site; it reads RMR. Cysteine 269 is a [4Fe-4S] cluster binding site.

The protein belongs to the radical SAM superfamily. MoaA family. In terms of assembly, monomer and homodimer. [4Fe-4S] cluster serves as cofactor.

The enzyme catalyses GTP + AH2 + S-adenosyl-L-methionine = (8S)-3',8-cyclo-7,8-dihydroguanosine 5'-triphosphate + 5'-deoxyadenosine + L-methionine + A + H(+). It functions in the pathway cofactor biosynthesis; molybdopterin biosynthesis. Its function is as follows. Catalyzes the cyclization of GTP to (8S)-3',8-cyclo-7,8-dihydroguanosine 5'-triphosphate. In Petrotoga mobilis (strain DSM 10674 / SJ95), this protein is GTP 3',8-cyclase.